Here is a 353-residue protein sequence, read N- to C-terminus: DNA integrity scanning protein DisA (353 aa).

A DAC domain is found at 6-144 (DKELMNILKI…GGIKYVLRDS (139 aa)). ATP-binding positions include G73, L91, and 104-108 (TRHRT).

The protein belongs to the DisA family. As to quaternary structure, homooctamer. Requires Mg(2+) as cofactor.

The enzyme catalyses 2 ATP = 3',3'-c-di-AMP + 2 diphosphate. Participates in a DNA-damage check-point that is active prior to asymmetric division when DNA is damaged. DisA forms globular foci that rapidly scan along the chromosomes during sporulation, searching for lesions. When a lesion is present, DisA pauses at the lesion site. This triggers a cellular response that culminates in a temporary block in sporulation initiation. Functionally, also has diadenylate cyclase activity, catalyzing the condensation of 2 ATP molecules into cyclic di-AMP (c-di-AMP). c-di-AMP acts as a signaling molecule that couples DNA integrity with progression of sporulation. The rise in c-di-AMP level generated by DisA while scanning the chromosome, operates as a positive signal that advances sporulation; upon encountering a lesion, the DisA focus arrests at the damaged site and halts c-di-AMP synthesis. The chain is DNA integrity scanning protein DisA from Clostridium botulinum (strain Loch Maree / Type A3).